The chain runs to 149 residues: Putative pre-16S rRNA nuclease (149 aa).

It belongs to the YqgF nuclease family.

The protein resides in the cytoplasm. Could be a nuclease involved in processing of the 5'-end of pre-16S rRNA. This Burkholderia orbicola (strain MC0-3) protein is Putative pre-16S rRNA nuclease.